Here is a 229-residue protein sequence, read N- to C-terminus: MFRESDNTIAPSNQDLNKPVVDKEQPAERTPFFVDKNAPHNEVDFARIESAVREILEAVGEDPDRDGLLETPERVARMYAEMFAGLKSDPGRHLAKVFAEDYDEIVLVRDISFCSMCEHHLLPFTGKAHIAYLPSGKVVGLSKLARVVEEVARRPQVQERLTHTVANLIEDRLSARGVAVVVESTHSCMTMRGIRKPGSLCLTSAMRGAFKTDPKSRAEVLGLINRAAS.

A disordered region spans residues 1–31 (MFRESDNTIAPSNQDLNKPVVDKEQPAERTP). Over residues 7–16 (NTIAPSNQDL) the composition is skewed to polar residues. Zn(2+) is bound by residues Cys-117, His-120, and Cys-188.

It belongs to the GTP cyclohydrolase I family. As to quaternary structure, toroid-shaped homodecamer, composed of two pentamers of five dimers.

It carries out the reaction GTP + H2O = 7,8-dihydroneopterin 3'-triphosphate + formate + H(+). It participates in cofactor biosynthesis; 7,8-dihydroneopterin triphosphate biosynthesis; 7,8-dihydroneopterin triphosphate from GTP: step 1/1. This chain is GTP cyclohydrolase 1, found in Rhodopirellula baltica (strain DSM 10527 / NCIMB 13988 / SH1).